The chain runs to 331 residues: Probable transcriptional regulatory protein At2g25830 (331 aa).

The protein belongs to the TACO1 family.

This Arabidopsis thaliana (Mouse-ear cress) protein is Probable transcriptional regulatory protein At2g25830.